Reading from the N-terminus, the 347-residue chain is Endophilin-A3 (347 aa).

The tract at residues 1 to 21 (MSVAGLKKQFHKASQLFSEKI) is membrane-binding amphipathic helix. A BAR domain is found at 18–249 (SEKISGAEGT…LELRIALASQ (232 aa)). The required for dimerization upon membrane association stretch occupies residues 60–87 (PNPAYRAKLGMLNTMSKLRGQVKATGYP). Positions 180 to 201 (EEEIRQAVEKFEESKELAERSM) form a coiled coil. The interaction with ARC stretch occupies residues 218 to 254 (FVEAALDYHRQSTEILQELQNKLELRIALASQVPRRD). The segment at 255–284 (YMPKPVNTSSTNANGVEPSSSSKLTGTDIP) is disordered. The span at 260–284 (VNTSSTNANGVEPSSSSKLTGTDIP) shows a compositional bias: polar residues. The 60-residue stretch at 285-344 (SDQPCCRGLYDFEPENEGELGFKEGDIITLTNQIDENWYEGMLRGESGFFPINYVEVIVP) folds into the SH3 domain.

This sequence belongs to the endophilin family. As to quaternary structure, interacts with SGIP1 and DYDC1. Interacts with FASLG. Interacts with ATXN2. Interacts with BIN2. Interacts with ARC, DNM1 and SYNJ1. As to expression, expressed at high level in testis and at lower level in brain and liver.

The protein localises to the cytoplasm. It localises to the early endosome membrane. Its function is as follows. Implicated in endocytosis. May recruit other proteins to membranes with high curvature. The chain is Endophilin-A3 (Sh3gl3) from Rattus norvegicus (Rat).